The primary structure comprises 318 residues: MVVNCFETCRAIDFWNRRNQLNFPGIVRLEHHQVILKPFNGTWENSEKPENQRKNRYNIRCWDHNRVILKSGSGSTSNYIHANYVDGFEDDKKFIITQGPMEETCNDFWKAVWQNNCSIIVMLTPTKGTNGEELCYQYWSLNEDSNIITEDFVIETVNTSVRPTYILTTLRITDKISNDSRRISHYQYTEWPVDETPTNHVDFIKFIKIININRKKSGSNYQQQLLSPIVVHCSDGVKKTGIFCAVDISLNQLVLRKTVSLAKTAEKIRQQRHSTISTPDDYLILQPGYYVLLYLLYKILAIIKIKNCGEKKSRRKST.

The region spanning 26–292 is the Tyrosine-protein phosphatase domain; the sequence is IVRLEHHQVI…LILQPGYYVL (267 aa). Catalysis depends on Cys-233, which acts as the Phosphocysteine intermediate.

The protein belongs to the protein-tyrosine phosphatase family.

It catalyses the reaction O-phospho-L-tyrosyl-[protein] + H2O = L-tyrosyl-[protein] + phosphate. In Microplitis demolitor bracovirus (isolate Webb) (MdBV), this protein is Probable tyrosine phosphatase protein N1 (N3).